A 331-amino-acid polypeptide reads, in one-letter code: Putative serine/threonine-protein kinase ZK507.1 (331 aa).

A Protein kinase domain is found at 1–270 (MKVNEEGFAI…CKLTLKEPLV (270 aa)). Asp116 functions as the Proton acceptor in the catalytic mechanism. Over residues 302-314 (SDRNEENSLDRSK) the composition is skewed to basic and acidic residues. Residues 302–331 (SDRNEENSLDRSKTGTLSFNNSKNKKPSRY) are disordered.

This sequence belongs to the protein kinase superfamily. Ser/Thr protein kinase family.

The catalysed reaction is L-seryl-[protein] + ATP = O-phospho-L-seryl-[protein] + ADP + H(+). It catalyses the reaction L-threonyl-[protein] + ATP = O-phospho-L-threonyl-[protein] + ADP + H(+). The chain is Putative serine/threonine-protein kinase ZK507.1 from Caenorhabditis elegans.